We begin with the raw amino-acid sequence, 203 residues long: Small ribosomal subunit protein uS4 (203 aa).

Residues 93–155 (RRLDSIVYRL…SKNLQQIRDA (63 aa)) form the S4 RNA-binding domain.

It belongs to the universal ribosomal protein uS4 family. Part of the 30S ribosomal subunit. Contacts protein S5. The interaction surface between S4 and S5 is involved in control of translational fidelity.

Functionally, one of the primary rRNA binding proteins, it binds directly to 16S rRNA where it nucleates assembly of the body of the 30S subunit. Its function is as follows. With S5 and S12 plays an important role in translational accuracy. The chain is Small ribosomal subunit protein uS4 from Lactobacillus acidophilus (strain ATCC 700396 / NCK56 / N2 / NCFM).